Here is a 176-residue protein sequence, read N- to C-terminus: HTH-type transcriptional regulator DctR (176 aa).

Residues 109-174 (VPEADVSLSR…ELVRHQHINY (66 aa)) enclose the HTH luxR-type domain. A DNA-binding region (H-T-H motif) is located at residues 133–152 (TEDILEKLKISLKTFYCHKH).

Its function is as follows. May act as a transcriptional regulator of dctA. The polypeptide is HTH-type transcriptional regulator DctR (dctR) (Escherichia coli O6:H1 (strain CFT073 / ATCC 700928 / UPEC)).